Consider the following 202-residue polypeptide: Hydrogenase expression/formation protein HoxM (202 aa).

Residues E15, D61, and H92 each contribute to the Ni(2+) site.

It belongs to the peptidase A31 family.

Its function is as follows. Absolutely required for hydrogenase activity. Mediates the attachment of hydrogenase to the bacterial membrane; attachment is a requirement for enzymatic activity. The chain is Hydrogenase expression/formation protein HoxM (hoxM) from Cupriavidus necator (strain ATCC 17699 / DSM 428 / KCTC 22496 / NCIMB 10442 / H16 / Stanier 337) (Ralstonia eutropha).